Consider the following 270-residue polypeptide: MLTPPRTVVRRDGGLYALERALQRRGFRQVAGADEAGRGACAGPLVAAAAILPPGRRGEVDGLADSKLLTPASRERVYAEVIARASAYAVVVIPAAEVDLRGLHVCNLAAMRRALASLATPPEYVLTDGFGVDGLDVPGLAVWKGDRVAACVAAASVLAKVTRDRIMVELDLEFPGYGFAEHKGYITAEHSAALRERGPCPEHRFSYVNVATVSGRQGAPPRARRPLVAEADEAMERAGVVKGTVGVALGERPWAGASVGNDVAMEGGMG.

The region spanning 28 to 222 is the RNase H type-2 domain; that stretch reads RQVAGADEAG…VSGRQGAPPR (195 aa). Positions 34, 35, and 128 each coordinate a divalent metal cation.

Belongs to the RNase HII family. Mn(2+) serves as cofactor. It depends on Mg(2+) as a cofactor.

Its subcellular location is the cytoplasm. The catalysed reaction is Endonucleolytic cleavage to 5'-phosphomonoester.. Functionally, endonuclease that specifically degrades the RNA of RNA-DNA hybrids. This Salinispora tropica (strain ATCC BAA-916 / DSM 44818 / JCM 13857 / NBRC 105044 / CNB-440) protein is Ribonuclease HII.